The chain runs to 174 residues: B3 domain-containing protein At2g31862 (174 aa).

The segment at residues 1-71 (MWVNLSCMCH…KLYIALVPLD (71 aa)) is a DNA-binding region (TF-B3).

The protein localises to the nucleus. The protein is B3 domain-containing protein At2g31862 of Arabidopsis thaliana (Mouse-ear cress).